The chain runs to 24 residues: Hyaluronidase (24 aa).

Expressed by the venom gland.

It is found in the secreted. It carries out the reaction Random hydrolysis of (1-&gt;4)-linkages between N-acetyl-beta-D-glucosamine and D-glucuronate residues in hyaluronate.. In terms of biological role, possesses high activity against hyaluronan in vitro. This Tityus stigmurus (Brazilian scorpion) protein is Hyaluronidase.